Here is a 24-residue protein sequence, read N- to C-terminus: Brevinin-1Ecb (24 aa).

A disulfide bridge links Cys18 with Cys24.

In terms of tissue distribution, expressed by the skin glands.

Its subcellular location is the secreted. Its function is as follows. Shows antibacterial activity against representative Gram-negative and Gram-positive bacterial species, and hemolytic activity. The polypeptide is Brevinin-1Ecb (Pelophylax ridibundus (Marsh frog)).